The primary structure comprises 76 residues: Large ribosomal subunit protein eL38 (76 aa).

Belongs to the eukaryotic ribosomal protein eL38 family.

The polypeptide is Large ribosomal subunit protein eL38 (RpL38) (Lysiphlebus testaceipes (Greenbugs aphid parastoid)).